We begin with the raw amino-acid sequence, 282 residues long: tRNA pseudouridine synthase B (282 aa).

Asp-36 acts as the Nucleophile in catalysis.

This sequence belongs to the pseudouridine synthase TruB family. Type 1 subfamily.

It catalyses the reaction uridine(55) in tRNA = pseudouridine(55) in tRNA. Functionally, responsible for synthesis of pseudouridine from uracil-55 in the psi GC loop of transfer RNAs. This Mycoplasmopsis pulmonis (strain UAB CTIP) (Mycoplasma pulmonis) protein is tRNA pseudouridine synthase B.